The sequence spans 242 residues: Probable transcriptional regulatory protein PG_0097 (242 aa).

Belongs to the TACO1 family.

It is found in the cytoplasm. This chain is Probable transcriptional regulatory protein PG_0097, found in Porphyromonas gingivalis (strain ATCC BAA-308 / W83).